The chain runs to 181 residues: MCKGLAALPHSCLERAKEIKIKLGILLQKPDSAVDLVIPYNEKPEKPAKAHKPSLEEVLQWRQSLDKLLQSNYGFASFKSFLKSEFSEENLEFWVACENYKKIKSPIKMAEKAKQIYEEFIQTEAPKEVNIDHFTKDITMKNLVEPSPHSFDLAQKRIYALMEKDSLPRFVRSEFYKELIN.

Residues 64–180 (SLDKLLQSNY…VRSEFYKELI (117 aa)) enclose the RGS domain.

It localises to the cytoplasm. The protein resides in the membrane. Functionally, inhibits signal transduction by increasing the GTPase activity of G protein alpha subunits thereby driving them into their inactive GDP-bound form. Binds to G(i)-alpha and G(o)-alpha, but not to G(s)-alpha. This chain is Regulator of G-protein signaling 5 (Rgs5), found in Rattus norvegicus (Rat).